A 405-amino-acid chain; its full sequence is Arginine biosynthesis bifunctional protein ArgJ (405 aa).

Substrate contacts are provided by Thr-152, Lys-178, Thr-189, Glu-276, Asn-400, and Thr-405. Thr-189 functions as the Nucleophile in the catalytic mechanism.

It belongs to the ArgJ family. As to quaternary structure, heterotetramer of two alpha and two beta chains.

Its subcellular location is the cytoplasm. It carries out the reaction N(2)-acetyl-L-ornithine + L-glutamate = N-acetyl-L-glutamate + L-ornithine. It catalyses the reaction L-glutamate + acetyl-CoA = N-acetyl-L-glutamate + CoA + H(+). The protein operates within amino-acid biosynthesis; L-arginine biosynthesis; L-ornithine and N-acetyl-L-glutamate from L-glutamate and N(2)-acetyl-L-ornithine (cyclic): step 1/1. Its pathway is amino-acid biosynthesis; L-arginine biosynthesis; N(2)-acetyl-L-ornithine from L-glutamate: step 1/4. In terms of biological role, catalyzes two activities which are involved in the cyclic version of arginine biosynthesis: the synthesis of N-acetylglutamate from glutamate and acetyl-CoA as the acetyl donor, and of ornithine by transacetylation between N(2)-acetylornithine and glutamate. In Pseudomonas savastanoi pv. phaseolicola (strain 1448A / Race 6) (Pseudomonas syringae pv. phaseolicola (strain 1448A / Race 6)), this protein is Arginine biosynthesis bifunctional protein ArgJ.